Reading from the N-terminus, the 268-residue chain is L-aspartate dehydrogenase (268 aa).

Residues Ala-125 and Asn-191 each coordinate NAD(+). Residue His-221 is part of the active site.

Belongs to the L-aspartate dehydrogenase family.

The enzyme catalyses L-aspartate + NADP(+) + H2O = oxaloacetate + NH4(+) + NADPH + H(+). The catalysed reaction is L-aspartate + NAD(+) + H2O = oxaloacetate + NH4(+) + NADH + H(+). It functions in the pathway cofactor biosynthesis; NAD(+) biosynthesis; iminoaspartate from L-aspartate (dehydrogenase route): step 1/1. In terms of biological role, specifically catalyzes the NAD or NADP-dependent dehydrogenation of L-aspartate to iminoaspartate. This Brucella anthropi (strain ATCC 49188 / DSM 6882 / CCUG 24695 / JCM 21032 / LMG 3331 / NBRC 15819 / NCTC 12168 / Alc 37) (Ochrobactrum anthropi) protein is L-aspartate dehydrogenase.